A 598-amino-acid chain; its full sequence is Protein HIGH CHLOROPHYLL FLUORESCENCE PHENOTYPE 173, chloroplastic (598 aa).

A chloroplast-targeting transit peptide spans 1–79; the sequence is MVGSIVGSNM…ITTKESEETV (79 aa). The tract at residues 42-106 is disordered; sequence VIPRAQSSSS…PTLKLDDVNP (65 aa). The segment covering 73–84 has biased composition (basic and acidic residues); it reads KESEETVAKKLD. Positions 87–97 are enriched in pro residues; the sequence is PPSPQSPPSPP.

Belongs to the NmrA-type oxidoreductase family. In terms of assembly, component of a high molecular weight complex containing psbA mRNA, OHP1, OHP2 and HCF244, and PSII core proteins D1/D2, HCF136 and HCF173. Interacts with LPE1.

It is found in the plastid. The protein localises to the chloroplast membrane. It localises to the chloroplast thylakoid membrane. The protein resides in the chloroplast stroma. Its function is as follows. Auxiliary factor required, together with HCF244, for the biogenesis of photosystem II (PSII), especially for the synthesis of the reaction center proteins (e.g. D1), via the regulation of the corresponding mRNA (e.g. psbA) translation initiation (ribosomal loading) and stabilization. The chain is Protein HIGH CHLOROPHYLL FLUORESCENCE PHENOTYPE 173, chloroplastic from Arabidopsis thaliana (Mouse-ear cress).